Reading from the N-terminus, the 142-residue chain is ATP synthase F(0) complex subunit C3, mitochondrial (142 aa).

A mitochondrion-targeting transit peptide spans 1–67; the sequence is MFACAKLACT…REFQTSAISR (67 aa). The helical transmembrane segment at 83-103 threads the bilayer; that stretch reads VGVAGSGAGIGTVFGSLIIGY. Lys-110 carries the N6,N6,N6-trimethyllysine modification. Residues 118 to 138 traverse the membrane as a helical segment; that stretch reads ILGFALSEAMGLFCLMVAFLI.

It belongs to the ATPase C chain family. In terms of assembly, F-type ATPases have 2 components, CF(1) - the catalytic core - and CF(0) - the membrane proton channel. CF(1) has five subunits: alpha(3), beta(3), gamma(1), delta(1), epsilon(1). CF(0) has three main subunits: a, b and c. Interacts with TMEM70 and TMEM242. Post-translationally, trimethylated by ATPSCKMT at Lys-110. Methylation is required for proper incorporation of the C subunit into the ATP synthase complex and mitochondrial respiration.

It localises to the mitochondrion membrane. Mitochondrial membrane ATP synthase (F(1)F(0) ATP synthase or Complex V) produces ATP from ADP in the presence of a proton gradient across the membrane which is generated by electron transport complexes of the respiratory chain. F-type ATPases consist of two structural domains, F(1) - containing the extramembraneous catalytic core and F(0) - containing the membrane proton channel, linked together by a central stalk and a peripheral stalk. During catalysis, ATP synthesis in the catalytic domain of F(1) is coupled via a rotary mechanism of the central stalk subunits to proton translocation. Part of the complex F(0) domain. A homomeric c-ring of probably 10 subunits is part of the complex rotary element. The sequence is that of ATP synthase F(0) complex subunit C3, mitochondrial from Homo sapiens (Human).